The chain runs to 291 residues: 4-hydroxy-tetrahydrodipicolinate synthase (291 aa).

T47 serves as a coordination point for pyruvate. Y134 acts as the Proton donor/acceptor in catalysis. Residue K162 is the Schiff-base intermediate with substrate of the active site. I205 serves as a coordination point for pyruvate.

The protein belongs to the DapA family. As to quaternary structure, homotetramer; dimer of dimers.

It is found in the cytoplasm. It catalyses the reaction L-aspartate 4-semialdehyde + pyruvate = (2S,4S)-4-hydroxy-2,3,4,5-tetrahydrodipicolinate + H2O + H(+). Its pathway is amino-acid biosynthesis; L-lysine biosynthesis via DAP pathway; (S)-tetrahydrodipicolinate from L-aspartate: step 3/4. Its function is as follows. Catalyzes the condensation of (S)-aspartate-beta-semialdehyde [(S)-ASA] and pyruvate to 4-hydroxy-tetrahydrodipicolinate (HTPA). This is 4-hydroxy-tetrahydrodipicolinate synthase from Methanospirillum hungatei JF-1 (strain ATCC 27890 / DSM 864 / NBRC 100397 / JF-1).